Reading from the N-terminus, the 110-residue chain is Toxin HigB-2 (110 aa).

In terms of biological role, toxic component of a type II toxin-antitoxin (TA) system. Inhibits translation by cleavage of mRNA. This is Toxin HigB-2 (higB-2) from Vibrio cholerae serotype O1 (strain ATCC 39315 / El Tor Inaba N16961).